Here is a 451-residue protein sequence, read N- to C-terminus: Tubulin alpha chain (451 aa).

Residue glutamine 11 coordinates GTP. Lysine 40 carries the N6-acetyllysine modification. Positions 71, 144, 145, 179, 206, and 228 each coordinate GTP. Position 71 (glutamate 71) interacts with Mg(2+). The active site involves glutamate 254. The segment at 432 to 451 (YEEVGAESAEGDDEDEGEDY) is disordered.

Belongs to the tubulin family. Dimer of alpha and beta chains. A typical microtubule is a hollow water-filled tube with an outer diameter of 25 nm and an inner diameter of 15 nM. Alpha-beta heterodimers associate head-to-tail to form protofilaments running lengthwise along the microtubule wall with the beta-tubulin subunit facing the microtubule plus end conferring a structural polarity. Microtubules usually have 13 protofilaments but different protofilament numbers can be found in some organisms and specialized cells. Requires Mg(2+) as cofactor. In terms of processing, undergoes a tyrosination/detyrosination cycle, the cyclic removal and re-addition of a C-terminal tyrosine residue by the enzymes tubulin tyrosine carboxypeptidase (TTCP) and tubulin tyrosine ligase (TTL), respectively. Acetylation of alpha chains at Lys-40 stabilizes microtubules and affects affinity and processivity of microtubule motors. This modification has a role in multiple cellular functions, ranging from cell motility, cell cycle progression or cell differentiation to intracellular trafficking and signaling.

The protein localises to the cytoplasm. The protein resides in the cytoskeleton. It catalyses the reaction GTP + H2O = GDP + phosphate + H(+). Its function is as follows. Tubulin is the major constituent of microtubules, a cylinder consisting of laterally associated linear protofilaments composed of alpha- and beta-tubulin heterodimers. Microtubules grow by the addition of GTP-tubulin dimers to the microtubule end, where a stabilizing cap forms. Below the cap, tubulin dimers are in GDP-bound state, owing to GTPase activity of alpha-tubulin. The polypeptide is Tubulin alpha chain (TBA) (Daucus carota (Wild carrot)).